We begin with the raw amino-acid sequence, 223 residues long: GrpE protein homolog, mitochondrial (223 aa).

This sequence belongs to the GrpE family. As to quaternary structure, component of the PAM complex, at least composed of mtHsp70, mge1, tim44, pam16, pam17 and pam18.

Its subcellular location is the mitochondrion matrix. Functionally, essential component of the PAM complex, a complex required for the translocation of transit peptide-containing proteins from the inner membrane into the mitochondrial matrix in an ATP-dependent manner. Seems to control the nucleotide-dependent binding of ssc1 to substrate proteins. The chain is GrpE protein homolog, mitochondrial (mge1) from Schizosaccharomyces pombe (strain 972 / ATCC 24843) (Fission yeast).